Here is a 134-residue protein sequence, read N- to C-terminus: Replication enhancer protein (134 aa).

The protein belongs to the geminiviridae replication enhancer protein family. In terms of assembly, homooligomer. Interacts with the replication-associated protein (REP). Interacts with host proliferating cell nuclear antigen (PCNA). Interacts with host retinoblastoma-related protein 1 (RBR1), and may thereby deregulate the host cell cycle. Oligomerization and interaction with PCNA are necessary for optimal replication enhancement.

Its function is as follows. Increases viral DNA accumulation. Enhances infectivity and symptom expression. This African cassava mosaic virus (isolate West Kenyan 844) (ACMV) protein is Replication enhancer protein.